The following is a 701-amino-acid chain: Serologically defined colon cancer antigen 8 homolog (701 aa).

Acidic residues predominate over residues 1 to 13 (MKPSLESDEEEEL). 2 disordered regions span residues 1–67 (MKPS…VQQS) and 84–114 (ANIQ…GVHN). The span at 45 to 67 (SEPNQQELLSSVQQNPCSPVQQS) shows a compositional bias: polar residues. Coiled-coil stretches lie at residues 119 to 173 (INNQ…LKEY), 203 to 258 (HKWR…AVAA), and 323 to 695 (QQVK…AGKR). Residues 364–387 (LASEQDKISQAREAARSESKKERE) form a disordered region.

Its subcellular location is the cytoplasm. It is found in the cytoskeleton. It localises to the microtubule organizing center. The protein localises to the centrosome. The protein resides in the centriole. Its subcellular location is the cilium basal body. It is found in the cell junction. In terms of biological role, plays a role in the establishment of cell polarity and epithelial lumen formation. Also plays an essential role in ciliogenesis and subsequent Hedgehog signaling pathway that requires the presence of intact primary cilia for pathway activation. Mechanistically, interacts with and mediates RABEP2 centrosomal localization which is critical for ciliogenesis. The sequence is that of Serologically defined colon cancer antigen 8 homolog (Sdccag8) from Danio rerio (Zebrafish).